A 215-amino-acid chain; its full sequence is A-type ATP synthase subunit E (215 aa).

This sequence belongs to the V-ATPase E subunit family. As to quaternary structure, has multiple subunits with at least A(3), B(3), C, D, E, F, H, I and proteolipid K(x).

It is found in the cell membrane. In terms of biological role, component of the A-type ATP synthase that produces ATP from ADP in the presence of a proton gradient across the membrane. The sequence is that of A-type ATP synthase subunit E from Thermofilum pendens (strain DSM 2475 / Hrk 5).